The chain runs to 785 residues: Toll-like receptor 2 (785 aa).

Positions 1-17 (MSRVLWTLWVLGAVTNL) are cleaved as a signal peptide. At 18–589 (SKEEAPDQSS…RLSVSECHRT (572 aa)) the chain is on the extracellular side. A disulfide bridge connects residues C31 and C37. LRR repeat units lie at residues 54–77 (AVRS…RDCV), 78–101 (NLKA…LSLW), 102–125 (SLEH…RPLS), 126–150 (SLKF…SQLT), 151–175 (NLRI…AGLT), 176–199 (FLEE…KSIQ), 200–223 (NISY…DLSS), 224–250 (SLKH…ETHT), 251–278 (LVKK…NYVS), 279–308 (GVLE…KNIG), 309–337 (QIET…SLTE), 338–361 (DVKR…QHLK), 362–388 (SLEY…DAWP), 389–414 (SLQT…LTLK), 415–437 (NLTN…QWPE), 438–457 (KMKY…GCIP), 458–478 (KTLE…LNLP), 479–500 (QLKE…SLLP), and 501–524 (MLLV…DSFH). The N-linked (GlcNAc...) asparagine glycan is linked to N115. N-linked (GlcNAc...) asparagine glycosylation is found at N200 and N246. The cysteines at positions 354 and 383 are disulfide-linked. Residues N415 and N443 are each glycosylated (N-linked (GlcNAc...) asparagine). C433 and C455 are joined by a disulfide. An LRRCT domain is found at 525–579 (TLKTLEAGGNNFICSCEFLSFTQEQQALAKVLIDWPANYLCDSPSHVRGQQVQDV). Residues 590 to 610 (ALVSGMCCALFLLILLTEVLC) form a helical membrane-spanning segment. At 611–785 (HRFHGLWYMR…WLNLRTAIKS (175 aa)) the chain is on the cytoplasmic side. The TIR domain occupies 640 to 783 (VCYDAFVSYS…GFWLNLRTAI (144 aa)). Residue K755 forms a Glycyl lysine isopeptide (Lys-Gly) (interchain with G-Cter in ubiquitin) linkage. The ATG16L1-binding motif signature appears at 762-779 (YLEWPTDDAQQEGFWLNL).

It belongs to the Toll-like receptor family. As to quaternary structure, interacts with LY96, TLR1 and TLR6 (via extracellular domain). TLR2 seems to exist in heterodimers with either TLR1 or TLR6 before stimulation by the ligand. The heterodimers form bigger oligomers in response to their corresponding ligands as well as further heterotypic associations with other receptors such as CD14 and/or CD36. Binds MYD88 (via TIR domain). Interacts with TICAM1. Interacts with CNPY3. Interacts with ATG16L1. Interacts with PPP1R11. Interacts with TICAM2. Interacts with TIRAP. Ubiquitinated at Lys-755 by PPP1R11, leading to its degradation. Deubiquitinated by USP2. Post-translationally, glycosylation of Asn-443 is critical for secretion of the N-terminal ectodomain of TLR2.

Its subcellular location is the membrane. The protein localises to the cytoplasmic vesicle. It is found in the phagosome membrane. The protein resides in the membrane raft. Functionally, cooperates with LY96 to mediate the innate immune response to bacterial lipoproteins and other microbial cell wall components. Cooperates with TLR1 or TLR6 to mediate the innate immune response to bacterial lipoproteins or lipopeptides. Acts via MYD88 and TRAF6, leading to NF-kappa-B activation, cytokine secretion and the inflammatory response. May also promote apoptosis in response to lipoproteins. Forms activation clusters composed of several receptors depending on the ligand, these clusters trigger signaling from the cell surface and subsequently are targeted to the Golgi in a lipid-raft dependent pathway. Forms the cluster TLR2:TLR6:CD14:CD36 in response to diacylated lipopeptides and TLR2:TLR1:CD14 in response to triacylated lipopeptides. The polypeptide is Toll-like receptor 2 (TLR2) (Canis lupus familiaris (Dog)).